A 309-amino-acid chain; its full sequence is Probable manganese-dependent inorganic pyrophosphatase (309 aa).

Positions 9, 13, 15, 75, 97, and 149 each coordinate Mn(2+).

The protein belongs to the PPase class C family. Mn(2+) is required as a cofactor.

It localises to the cytoplasm. The catalysed reaction is diphosphate + H2O = 2 phosphate + H(+). The chain is Probable manganese-dependent inorganic pyrophosphatase from Staphylococcus haemolyticus (strain JCSC1435).